A 340-amino-acid chain; its full sequence is Probable peroxidase 61 (340 aa).

The N-terminal stretch at 1–25 (MQFVNFFPLLALVVISLAGKATVEA) is a signal peptide. 4 disulfides stabilise this stretch: C46/C122, C79/C84, C128/C331, and C205/C237. N63 carries an N-linked (GlcNAc...) asparagine glycan. Residue R73 is part of the active site. Ca(2+)-binding residues include D78, V81, G83, D85, and S87. P168 lines the substrate pocket. H198 provides a ligand contact to heme b. S199 is a Ca(2+) binding site. N-linked (GlcNAc...) asparagine glycosylation occurs at N226. Residues D255 and S258 each coordinate Ca(2+).

Belongs to the peroxidase family. Classical plant (class III) peroxidase subfamily. Requires heme b as cofactor. It depends on Ca(2+) as a cofactor.

Its subcellular location is the secreted. It catalyses the reaction 2 a phenolic donor + H2O2 = 2 a phenolic radical donor + 2 H2O. Functionally, removal of H(2)O(2), oxidation of toxic reductants, biosynthesis and degradation of lignin, suberization, auxin catabolism, response to environmental stresses such as wounding, pathogen attack and oxidative stress. The enzyme activity has to be proved. The protein is Probable peroxidase 61 (PER61) of Arabidopsis thaliana (Mouse-ear cress).